We begin with the raw amino-acid sequence, 390 residues long: Probable purine permease 7 (390 aa).

The next 10 membrane-spanning stretches (helical) occupy residues 42–62, 74–94, 110–130, 131–151, 169–189, 205–225, 244–264, 286–306, 312–332, and 341–361; these read WLRV…ATIL, TYVV…FRFF, SPSF…VSAY, AYLS…LILA, FTPL…LLVV, VIGF…LSLI, LAIY…FASG, TLAS…GLIF, FSNS…VIVF, and IFSI…HYLD.

This sequence belongs to the purine permeases (TC 2.A.7.14) family.

Its subcellular location is the membrane. The polypeptide is Probable purine permease 7 (PUP7) (Arabidopsis thaliana (Mouse-ear cress)).